We begin with the raw amino-acid sequence, 266 residues long: MRSLAVVVAVVATVAMAIGTAHGSVSSIISHAQFDRMLLHRNDGACQAKGFYTYDAFVAAANAFPGFGATGSTDARKRDVAAFLAQTSHETTGGWATAPDGAFAWGYCFKQERGAAADYCTPSAQWPCAPGKRYYGRGPIQLSHNYNYGPAGRAIGVDLLRNPDLVATDPTVSFKTALWFWMTAQAPKPSSHAVITGKWSPSGADRAAGRAPGFGVITNIINGGLECGHGQDSRVADRIGFYKRYCDILGVGYGDNLDCYNQRPFA.

A signal peptide spans Met1–Gly23. 3 cysteine pairs are disulfide-bonded: Cys46/Cys108, Cys120/Cys128, and Cys246/Cys259. The active-site Proton donor is Glu90.

This sequence belongs to the glycosyl hydrolase 19 family. Chitinase class II subfamily. In terms of tissue distribution, localized to the starchy endoderm of the seed May localize to other parts of the seed including the aleurone cells (at protein level).

The enzyme catalyses Random endo-hydrolysis of N-acetyl-beta-D-glucosaminide (1-&gt;4)-beta-linkages in chitin and chitodextrins.. Its function is as follows. Defense against chitin-containing fungal pathogens. Binds the hyphal tips of fungi and degrades nascent chitin. The sequence is that of Basic endochitinase C from Secale cereale (Rye).